Here is a 35-residue protein sequence, read N- to C-terminus: Antimicrobial peptide 3 (35 aa).

In terms of domain architecture, Chitin-binding type-1 spans 4–35; that stretch reads GGECGGRFGGCAGGQCCSRFGFCGSGPKYCAH. 3 disulfide bridges follow: Cys-7–Cys-20, Cys-14–Cys-26, and Cys-19–Cys-33.

Post-translationally, contains 3 disulfide bonds. As to expression, expressed in leaf, flower, stem and seed with highest expression in leaf (at protein level).

In terms of biological role, has antifungal activity against A.niger (IC(50)=5.4 uM), B.sorokiniana (IC(50)=2.0 uM), B.cinerea (IC(50)=1.6 uM), F.solani (IC(50)=3.7 uM) and A.alternata (IC(50)=5.0 uM). Binds chitin in vitro. Has no antibacterial activity at concentrations up to 10 uM. This Stellaria media (Common chickweed) protein is Antimicrobial peptide 3.